The following is a 309-amino-acid chain: MTKKVGLLVMAYGTPYKDEDIERYYTDIRHGHKPSEEMIADLRGRYHAIGGLSPLAKITEAQAYGLEKALNESQDEVEFKAYIGLKHIEPFIEDAVEAMHKDGIEEAISIVLAPHYSSFSVEAYNKRAKDAADKLGGLRIKAINDWYKQPKFIQMWADRINETAKQIPADELLDTVLIVSAHSLPEKIKQHNDPYPDQLQETADFIFEKVVVPHYALGWQSEGKTGEPWLGPDVQDLTRELYGREKYKHFIYTPVGFVAEHLEVLYDNDYECKVVTDEVGATYHRPPMPNSDPEFLEVLRTVVWEKYSN.

Residues Y12, R29, 45–46 (RY), S53, and Y124 contribute to the Fe-coproporphyrin III site. Positions 182 and 263 each coordinate Fe(2+).

The protein belongs to the ferrochelatase family.

The protein resides in the cytoplasm. It carries out the reaction Fe-coproporphyrin III + 2 H(+) = coproporphyrin III + Fe(2+). Its pathway is porphyrin-containing compound metabolism; protoheme biosynthesis. In terms of biological role, involved in coproporphyrin-dependent heme b biosynthesis. Catalyzes the insertion of ferrous iron into coproporphyrin III to form Fe-coproporphyrin III. The sequence is that of Coproporphyrin III ferrochelatase from Listeria monocytogenes serotype 4b (strain F2365).